Reading from the N-terminus, the 891-residue chain is Iron-regulated surface determinant protein H (891 aa).

An N-terminal signal peptide occupies residues 1–40 (MNKHHPKLRSFYSIRKSTLGVASVIVSTLFLITSQHQAQA). The interval 42–77 (ENTNTSDKISENQNNNATTTQQPKDTNQTQPATQPV) is disordered. A compositionally biased stretch (low complexity) spans 53–63 (NQNNNATTTQQ). The segment covering 64-77 (PKDTNQTQPATQPV) has biased composition (polar residues). The NEAT 1 domain maps to 105-232 (DIGPREQVNF…IYNDPSLVKS (128 aa)). The interval 239 to 324 (VTNDQSSSDA…NQSDVNQQYP (86 aa)) is disordered. Low complexity predominate over residues 240-276 (TNDQSSSDASNQTNTNTSNQNTSTTNNANNQPQATTN). Over residues 277–323 (MSQPAQPKSSANADQASSQPAHETNSNGNTNDKTNESSNQSDVNQQY) the composition is skewed to polar residues. 2 NEAT domains span residues 345 to 471 (TADN…DYVD) and 543 to 660 (QLTD…TKDD). Disordered stretches follow at residues 657-718 (TKDD…DADN), 752-777 (IAKDTDRNVDNSVGMSSNVDTDKDSN), and 835-864 (TVKTKEKAGTPSKENKLSQSKMLPKTGETT). Polar residues-rich tracts occupy residues 663 to 677 (SQNNTSEPLNVQTGQ) and 687 to 697 (AENSSTATNPK). The span at 698-718 (DASDKADVIEPESDVVKDADN) shows a compositional bias: basic and acidic residues. A compositionally biased stretch (basic and acidic residues) spans 835–850 (TVKTKEKAGTPSKENK). Residues 851–864 (LSQSKMLPKTGETT) are compositionally biased toward polar residues. The LPXTG sorting signal motif lies at 857 to 861 (LPKTG). A Pentaglycyl murein peptidoglycan amidated threonine modification is found at Thr860. The propeptide at 861 to 891 (GETTSSQSWWGLYALLGMLALFIPKFRKESK) is removed by sortase.

This sequence belongs to the IsdH family.

It localises to the secreted. Its subcellular location is the cell wall. Its function is as follows. Binds human plasma haptoglobin-hemoglobin complexes, haptoglobin and hemoglobin. Binds haptoglobin-hemoglobin complexes with significantly higher affinity than haptoglobin alone. This Staphylococcus aureus (strain N315) protein is Iron-regulated surface determinant protein H (isdH).